An 80-amino-acid polypeptide reads, in one-letter code: Serine rich endogenous peptide 15 (80 aa).

A signal peptide spans M1–A28. Short sequence motifs (SCOOP motif) lie at residues A32–G46 and P66–P80. The segment at Y37–P80 is disordered. 2 consecutive short sequence motifs (sxS motif essential for MIK2 binding) follow at residues S38–S40 and S72–S74. Polar residues predominate over residues H71–P80.

The protein belongs to the serine rich endogenous peptide (SCOOP) phytocytokine family. Interacts with MIK2 (via extracellular leucine-rich repeat domain); this interaction triggers the formation of complex between MIK2 and the BAK1/SERK3 and SERK4 coreceptors, and subsequent BAK1 activation by phosphorylation. Mostly expressed in leaves, and, to a lower extent, in seedlings shoots, roots, stems, siliques, seeds and flowers.

Its subcellular location is the cell membrane. It is found in the secreted. The protein resides in the extracellular space. The protein localises to the apoplast. It localises to the endoplasmic reticulum. Its subcellular location is the golgi apparatus. In terms of biological role, brassicaceae-specific phytocytokine (plant endogenous peptide released into the apoplast) perceived by MIK2 in a BAK1/SERK3 and SERK4 coreceptors-dependent manner, that modulates various physiological and antimicrobial processes including growth prevention and reactive oxygen species (ROS) response regulation. Inhibits root growth. In Arabidopsis thaliana (Mouse-ear cress), this protein is Serine rich endogenous peptide 15.